A 337-amino-acid polypeptide reads, in one-letter code: Glycerol-3-phosphate dehydrogenase [NAD(P)+] (337 aa).

Positions 11, 30, and 102 each coordinate NADPH. 3 residues coordinate sn-glycerol 3-phosphate: lysine 102, glycine 138, and serine 140. An NADPH-binding site is contributed by alanine 142. Positions 193, 246, 256, 257, and 258 each coordinate sn-glycerol 3-phosphate. Lysine 193 functions as the Proton acceptor in the catalytic mechanism. Residue arginine 257 participates in NADPH binding. NADPH contacts are provided by valine 281 and glutamate 283.

The protein belongs to the NAD-dependent glycerol-3-phosphate dehydrogenase family.

Its subcellular location is the cytoplasm. It carries out the reaction sn-glycerol 3-phosphate + NAD(+) = dihydroxyacetone phosphate + NADH + H(+). The enzyme catalyses sn-glycerol 3-phosphate + NADP(+) = dihydroxyacetone phosphate + NADPH + H(+). The protein operates within membrane lipid metabolism; glycerophospholipid metabolism. Catalyzes the reduction of the glycolytic intermediate dihydroxyacetone phosphate (DHAP) to sn-glycerol 3-phosphate (G3P), the key precursor for phospholipid synthesis. The chain is Glycerol-3-phosphate dehydrogenase [NAD(P)+] from Variovorax paradoxus (strain S110).